The sequence spans 637 residues: Threonine--tRNA ligase (637 aa).

The 61-residue stretch at 1-61 (MIKVTLKDGK…DKDCNLEILT (61 aa)) folds into the TGS domain. Residues 242 to 532 (DHRKIGKELD…LIEHYAGAFP (291 aa)) are catalytic. Residues cysteine 333, histidine 384, and histidine 509 each coordinate Zn(2+).

This sequence belongs to the class-II aminoacyl-tRNA synthetase family. In terms of assembly, homodimer. It depends on Zn(2+) as a cofactor.

It localises to the cytoplasm. It catalyses the reaction tRNA(Thr) + L-threonine + ATP = L-threonyl-tRNA(Thr) + AMP + diphosphate + H(+). In terms of biological role, catalyzes the attachment of threonine to tRNA(Thr) in a two-step reaction: L-threonine is first activated by ATP to form Thr-AMP and then transferred to the acceptor end of tRNA(Thr). Also edits incorrectly charged L-seryl-tRNA(Thr). The protein is Threonine--tRNA ligase of Clostridium acetobutylicum (strain ATCC 824 / DSM 792 / JCM 1419 / IAM 19013 / LMG 5710 / NBRC 13948 / NRRL B-527 / VKM B-1787 / 2291 / W).